The following is a 95-amino-acid chain: Large ribosomal subunit protein uL23 (95 aa).

Belongs to the universal ribosomal protein uL23 family. Part of the 50S ribosomal subunit. Contacts protein L29, and trigger factor when it is bound to the ribosome.

Functionally, one of the early assembly proteins it binds 23S rRNA. One of the proteins that surrounds the polypeptide exit tunnel on the outside of the ribosome. Forms the main docking site for trigger factor binding to the ribosome. The sequence is that of Large ribosomal subunit protein uL23 from Pelotomaculum thermopropionicum (strain DSM 13744 / JCM 10971 / SI).